Here is a 970-residue protein sequence, read N- to C-terminus: MAVSMREVDAVFQGAGQKDGLEIWRIEKLQAVPVPKESHGRFFTGDSYVILKTTALKNGSFRHDIHYWLGKDTSQDEAGTAAIKTVELDAALGGRAVQYREVQGNETERFLSYFKPCIIPEEGGIASGFRHTEINEREHVTRLFVCRGKHTVHVKEVPFARSSLNHDDIFILDTKSKIFQFNGSNSSIQERAKALEVVQYLKDSNHEGKCDVGSVEDGKLMADADAGEFWGLFGGFAPLPRKTFSDLNGKDSAFSSKLICLNKGQTVPVDFDVLTRELLDSTKCYLLDCGSEIYVWMGRETPLEERKRAGSAAEELLREVNRPKSHIVRLMEGFETVIFRSKFSKWPKKADAVVSDESRGKVAALLKRQGFNVKGLAKAAPVKEEPQPQIDCTGNLQVWRVNGTEKTFLSFSEQCKFYSGDCYIFQYSYPGEEGEECLIGTWFGKKSVQDEKTTAISVASKMVESLKFQAVMVRLYEGKEPAEFFSIFQNLVIFKGGVSTGYKKFVSENGIEDDTYSENGVALFRVQGSGPENMQAIQVDTAATSLNSSYCYVLHDGDTLFTWIGNLSSSMDQELAERQLDVIKPNLQSRMLKEGSEYDQFWKLLGVKSEYPSQKIAKDQESDPHLFSCTFSKGVLKVREIFNFTQDDLMTEDVFILDCHSCVFVWVGQRVDTKMRAQALSVGEKFLELDILMENSSQETPVYVITEGSEPQFFTRFFTWDSAKSAMHGNSFERRLSIVKDGVKPKLDKPKRRPTTSSSHTGRSSVPEKSQRSRSMSFSPDRVRVRGRSPAFNALAANFENPNARNLSTPPPAIRKPSPKSPSSDPTKPPQRAASIAAISASFERPRPTLIPKSIKASPDVNKPQVEASKPKPEANGKDSTPSKDSPTVTPTIQEDLKEGQPENEEGLPVYPYERLRTSSINPVTDIDVTKRETYLSAAEFRERFGMTKEAFAKLPKWKQNRLKIALQLF.

Gelsolin-like repeat units follow at residues 31–111, 151–219, 273–339, 416–484, 536–576, and 643–714; these read AVPV…ERFL, TVHV…EDGK, VLTR…TVIF, KFYS…PAEF, AIQV…QELA, and NFTQ…PQFF. The interval 741 to 908 is disordered; sequence DGVKPKLDKP…EGQPENEEGL (168 aa). Over residues 755–778 the composition is skewed to polar residues; that stretch reads TTSSSHTGRSSVPEKSQRSRSMSF. The span at 833–842 shows a compositional bias: low complexity; the sequence is AASIAAISAS. The span at 878-893 shows a compositional bias: polar residues; it reads KDSTPSKDSPTVTPTI. The HP domain maps to 905 to 970; sequence EEGLPVYPYE…NRLKIALQLF (66 aa).

This sequence belongs to the villin/gelsolin family. As to expression, expressed in roots, young leaves, and inflorescences, mostly in the vasculature of roots, leaves, and filaments of the anthers and in epidermal cells of the elongation zone and root hairs. Also detected in guard cells.

It localises to the cytoplasm. The protein localises to the cytoskeleton. Its function is as follows. Ca(2+)-regulated actin-binding protein. Binds actin microfilaments (MFs). Involved in actin filament bundling, severing and capping. Caps the barbed end of actin filaments and is able to sever them in a calcium-dependent manner. MF severing is promoted by VLN1. This chain is Villin-3, found in Oryza sativa subsp. japonica (Rice).